Reading from the N-terminus, the 234-residue chain is 1-(5-phosphoribosyl)-5-[(5-phosphoribosylamino)methylideneamino] imidazole-4-carboxamide isomerase (234 aa).

Asp-9 functions as the Proton acceptor in the catalytic mechanism. The active-site Proton donor is the Asp-131.

The protein belongs to the HisA/HisF family.

It is found in the cytoplasm. It carries out the reaction 1-(5-phospho-beta-D-ribosyl)-5-[(5-phospho-beta-D-ribosylamino)methylideneamino]imidazole-4-carboxamide = 5-[(5-phospho-1-deoxy-D-ribulos-1-ylimino)methylamino]-1-(5-phospho-beta-D-ribosyl)imidazole-4-carboxamide. It participates in amino-acid biosynthesis; L-histidine biosynthesis; L-histidine from 5-phospho-alpha-D-ribose 1-diphosphate: step 4/9. This chain is 1-(5-phosphoribosyl)-5-[(5-phosphoribosylamino)methylideneamino] imidazole-4-carboxamide isomerase, found in Staphylococcus epidermidis (strain ATCC 12228 / FDA PCI 1200).